The chain runs to 891 residues: Valine--tRNA ligase (891 aa).

A 'HIGH' region motif is present at residues 43–53; it reads PFTSGTLHLGH. The 'KMSKS' region signature appears at 536–540; it reads KMSKS. Residue K539 coordinates ATP.

It belongs to the class-I aminoacyl-tRNA synthetase family. ValS type 2 subfamily.

The protein resides in the cytoplasm. The enzyme catalyses tRNA(Val) + L-valine + ATP = L-valyl-tRNA(Val) + AMP + diphosphate. Catalyzes the attachment of valine to tRNA(Val). As ValRS can inadvertently accommodate and process structurally similar amino acids such as threonine, to avoid such errors, it has a 'posttransfer' editing activity that hydrolyzes mischarged Thr-tRNA(Val) in a tRNA-dependent manner. The polypeptide is Valine--tRNA ligase (Pyrococcus horikoshii (strain ATCC 700860 / DSM 12428 / JCM 9974 / NBRC 100139 / OT-3)).